The chain runs to 205 residues: Large ribosomal subunit protein bL25A (205 aa).

It belongs to the bacterial ribosomal protein bL25 family. CTC subfamily. In terms of assembly, part of the 50S ribosomal subunit; part of the 5S rRNA/L5/L18/L25 subcomplex. Contacts the 5S rRNA. Binds to the 5S rRNA independently of L5 and L18.

Its function is as follows. This is one of the proteins that binds to the 5S RNA in the ribosome where it forms part of the central protuberance. This chain is Large ribosomal subunit protein bL25A, found in Symbiobacterium thermophilum (strain DSM 24528 / JCM 14929 / IAM 14863 / T).